A 670-amino-acid polypeptide reads, in one-letter code: UvrABC system protein B (670 aa).

Residues 51–433 (EGLKKREQFQ…SARIVEQIIR (383 aa)) form the Helicase ATP-binding domain. 64–71 (GVTGSGKT) is a binding site for ATP. A Beta-hairpin motif is present at residues 117 to 140 (YYDYYQPESYLPAKDQYIEKDAQI). The 160-residue stretch at 453 to 612 (DVMQEIRKIV…IVPKTIRKPI (160 aa)) folds into the Helicase C-terminal domain. Positions 631 to 666 (PNVIIELDAEMREAADRLDFERAIQLRELIKKLEKE) constitute a UVR domain.

It belongs to the UvrB family. In terms of assembly, forms a heterotetramer with UvrA during the search for lesions. Interacts with UvrC in an incision complex.

Its subcellular location is the cytoplasm. The UvrABC repair system catalyzes the recognition and processing of DNA lesions. A damage recognition complex composed of 2 UvrA and 2 UvrB subunits scans DNA for abnormalities. Upon binding of the UvrA(2)B(2) complex to a putative damaged site, the DNA wraps around one UvrB monomer. DNA wrap is dependent on ATP binding by UvrB and probably causes local melting of the DNA helix, facilitating insertion of UvrB beta-hairpin between the DNA strands. Then UvrB probes one DNA strand for the presence of a lesion. If a lesion is found the UvrA subunits dissociate and the UvrB-DNA preincision complex is formed. This complex is subsequently bound by UvrC and the second UvrB is released. If no lesion is found, the DNA wraps around the other UvrB subunit that will check the other stand for damage. The chain is UvrABC system protein B from Methanosarcina acetivorans (strain ATCC 35395 / DSM 2834 / JCM 12185 / C2A).